The primary structure comprises 70 residues: Putative RNA-binding protein YbcJ (70 aa).

The region spanning 12-68 is the S4 RNA-binding domain; that stretch reads VELCDLLKLEGWSESGAQAKIAIAEGQVKVDGAVETRKRCKIVAGQTVSFAGHSVQV.

In pull-down experiments interacts with CedA.

Its structure and the presence of conserved basic residues indicates that it probably binds RNA. The protein is Putative RNA-binding protein YbcJ (ybcJ) of Escherichia coli (strain K12).